We begin with the raw amino-acid sequence, 357 residues long: MKKSLIALTLAALPVAAMADVTLYGQVKAGVEVSRTKETVNHVSTKNKTATEIADFGSRIGFKGHEHLSNNLNAIWQVEQNTSVAGTDKGWGTRESFIGLEGGFGKVRAGKLNTALKDNSDSVDPWESSDANASVLQFGKLKRVDERKVSVRYDSPVFAGFSASAQYQPRDNANPEDKHVHDVKTRHSFDLGLNYENSGFFGRYAGTFAKRKVLSDDHLELFNSNTTLGSGVYKDYQAHRLVGGYDANNVLVSVAGQYEGFKADVADAKKNERTEVAVTGGYRMGNVMPRLSYAHGFKAKENGVKQGNSQYNQVIVGADYDFSKRTSALVSAGWLKEGKGGDKTQSTAGLVGLRHKF.

The signal sequence occupies residues 1 to 19; sequence MKKSLIALTLAALPVAAMA.

It belongs to the Gram-negative porin family. Homotrimer.

Its subcellular location is the cell outer membrane. Functionally, serves as a slightly cation selective porin. In Neisseria sicca, this protein is Major outer membrane protein P.IB (por).